Reading from the N-terminus, the 277-residue chain is Thymidylate synthase (277 aa).

Position 21 (Arg21) interacts with dUMP. His51 lines the (6R)-5,10-methylene-5,6,7,8-tetrahydrofolate pocket. Residue 126 to 127 coordinates dUMP; the sequence is RR. The active-site Nucleophile is the Cys159. DUMP contacts are provided by residues 179–182, Asn190, and 220–222; these read RSAD and HLY. Position 182 (Asp182) interacts with (6R)-5,10-methylene-5,6,7,8-tetrahydrofolate. Ala276 provides a ligand contact to (6R)-5,10-methylene-5,6,7,8-tetrahydrofolate.

Belongs to the thymidylate synthase family. Bacterial-type ThyA subfamily. As to quaternary structure, homodimer.

It localises to the cytoplasm. The enzyme catalyses dUMP + (6R)-5,10-methylene-5,6,7,8-tetrahydrofolate = 7,8-dihydrofolate + dTMP. It participates in pyrimidine metabolism; dTTP biosynthesis. Functionally, catalyzes the reductive methylation of 2'-deoxyuridine-5'-monophosphate (dUMP) to 2'-deoxythymidine-5'-monophosphate (dTMP) while utilizing 5,10-methylenetetrahydrofolate (mTHF) as the methyl donor and reductant in the reaction, yielding dihydrofolate (DHF) as a by-product. This enzymatic reaction provides an intracellular de novo source of dTMP, an essential precursor for DNA biosynthesis. The sequence is that of Thymidylate synthase from Thioalkalivibrio sulfidiphilus (strain HL-EbGR7).